Reading from the N-terminus, the 22-residue chain is Heat shock 70-related protein 1, mitochondrial (22 aa).

Belongs to the heat shock protein 70 family.

The protein localises to the mitochondrion. This is Heat shock 70-related protein 1, mitochondrial from Leishmania tarentolae (Sauroleishmania tarentolae).